A 159-amino-acid polypeptide reads, in one-letter code: Phosphopantetheine adenylyltransferase (159 aa).

Threonine 10 contacts substrate. ATP contacts are provided by residues 10–11 (TF) and histidine 18. Substrate is bound by residues lysine 42, methionine 74, and arginine 88. ATP contacts are provided by residues 89–91 (GLR), glutamate 99, and 124–130 (WSFISSS).

Belongs to the bacterial CoaD family. As to quaternary structure, homohexamer. Requires Mg(2+) as cofactor.

It localises to the cytoplasm. It catalyses the reaction (R)-4'-phosphopantetheine + ATP + H(+) = 3'-dephospho-CoA + diphosphate. The protein operates within cofactor biosynthesis; coenzyme A biosynthesis; CoA from (R)-pantothenate: step 4/5. Functionally, reversibly transfers an adenylyl group from ATP to 4'-phosphopantetheine, yielding dephospho-CoA (dPCoA) and pyrophosphate. The sequence is that of Phosphopantetheine adenylyltransferase from Escherichia coli O7:K1 (strain IAI39 / ExPEC).